A 465-amino-acid polypeptide reads, in one-letter code: Adenosylhomocysteinase (465 aa).

The substrate site is built by threonine 56, aspartate 131, and glutamate 191. 192–194 is a binding site for NAD(+); the sequence is TTT. 2 residues coordinate substrate: lysine 221 and aspartate 225. Residues asparagine 226, 255-260, glutamate 278, asparagine 313, 334-336, and asparagine 379 each bind NAD(+); these read GYGDVG and IGH.

This sequence belongs to the adenosylhomocysteinase family. Requires NAD(+) as cofactor.

Its subcellular location is the cytoplasm. It catalyses the reaction S-adenosyl-L-homocysteine + H2O = L-homocysteine + adenosine. Its pathway is amino-acid biosynthesis; L-homocysteine biosynthesis; L-homocysteine from S-adenosyl-L-homocysteine: step 1/1. In terms of biological role, may play a key role in the regulation of the intracellular concentration of adenosylhomocysteine. The protein is Adenosylhomocysteinase of Bartonella tribocorum (strain CIP 105476 / IBS 506).